A 189-amino-acid chain; its full sequence is Streptothricin acetyltransferase (189 aa).

In terms of domain architecture, N-acetyltransferase spans 44–189 (FALREVPADP…HALYMSMPCP (146 aa)). Positions 55 to 76 (LVKVFPDDGGSDGEDGAEGEDA) are disordered. The span at 63 to 75 (GGSDGEDGAEGED) shows a compositional bias: acidic residues.

This sequence belongs to the acetyltransferase family. GNAT subfamily.

It catalyses the reaction streptothricin F + acetyl-CoA = N(beta)-acetylstreptothricin F + CoA + H(+). Involved in resistance to streptothricin, a broad-spectrum antibiotic produced by streptomycetes. Detoxifies streptothricin via acetylation of the beta amino group of the first beta-lysyl moiety of streptothricin. The sequence is that of Streptothricin acetyltransferase from Streptomyces lavendulae.